A 235-amino-acid polypeptide reads, in one-letter code: Adapter protein MecA (235 aa).

Residues 113-135 (LRQSDKGDIVKSKVSSSDHKDGS) show a composition bias toward basic and acidic residues. Positions 113–136 (LRQSDKGDIVKSKVSSSDHKDGSQ) are disordered.

This sequence belongs to the MecA family. In terms of assembly, homodimer.

Its function is as follows. Enables the recognition and targeting of unfolded and aggregated proteins to the ClpC protease or to other proteins involved in proteolysis. This is Adapter protein MecA from Leuconostoc mesenteroides subsp. mesenteroides (strain ATCC 8293 / DSM 20343 / BCRC 11652 / CCM 1803 / JCM 6124 / NCDO 523 / NBRC 100496 / NCIMB 8023 / NCTC 12954 / NRRL B-1118 / 37Y).